The following is a 218-amino-acid chain: Glutathione S-transferase-like protein OpS6 (218 aa).

The GST N-terminal domain maps to 5–86; sequence QPIKLYAHKK…YLIEQYDKDG (82 aa). Residues 92–218 form the GST C-terminal domain; it reads SLQDKSLARA…KIAATKAALA (127 aa).

It belongs to the GST superfamily.

It participates in secondary metabolite biosynthesis. In terms of biological role, glutathione S-transferase-like protein; part of the gene cluster that mediates the biosynthesis of the bibenzoquinone oosporein, a metabolite required for fungal virulence that acts by evading host immunity to facilitate fungal multiplication in insects. The non-reducing polyketide synthase OpS1 produces orsellinic acid by condensing acetyl-CoA with 3 malonyl-CoA units. Orsellinic acid is then hydroxylated to benzenetriol by the hydroxylase OpS4. The intermediate is oxidized either nonenzymatically to 5,5'-dideoxy-oosporein or enzymatically to benzenetetrol by the oxidoreductase OpS7. The latter is further dimerized to oosporein by the catalase OpS5. OpS6 probably functions en route for protecting cells against oxidative stress by scavenging any leaked free radical form of benzenetetrol by activating the thiol group of glutathione. This chain is Glutathione S-transferase-like protein OpS6, found in Beauveria bassiana (strain ARSEF 2860) (White muscardine disease fungus).